We begin with the raw amino-acid sequence, 102 residues long: uncharacterized protein (102 aa).

This is an uncharacterized protein from Sulfolobus spindle-shape virus 1 (SSV1).